We begin with the raw amino-acid sequence, 201 residues long: Holliday junction branch migration complex subunit RuvA (201 aa).

The tract at residues 1–63 (MIEYIKGEIA…EDAYVLYGFA (63 aa)) is domain I. The tract at residues 64 to 142 (DKQERELFLL…TGAMAATAVG (79 aa)) is domain II. The tract at residues 143–153 (GAAGALLPAMN) is flexible linker. Positions 153–201 (NAEVQEEAIAALTMLGFAAAPSQKAVLAILKEEPDAPVEKVIKLALKRL) are domain III.

Belongs to the RuvA family. As to quaternary structure, homotetramer. Forms an RuvA(8)-RuvB(12)-Holliday junction (HJ) complex. HJ DNA is sandwiched between 2 RuvA tetramers; dsDNA enters through RuvA and exits via RuvB. An RuvB hexamer assembles on each DNA strand where it exits the tetramer. Each RuvB hexamer is contacted by two RuvA subunits (via domain III) on 2 adjacent RuvB subunits; this complex drives branch migration. In the full resolvosome a probable DNA-RuvA(4)-RuvB(12)-RuvC(2) complex forms which resolves the HJ.

Its subcellular location is the cytoplasm. The RuvA-RuvB-RuvC complex processes Holliday junction (HJ) DNA during genetic recombination and DNA repair, while the RuvA-RuvB complex plays an important role in the rescue of blocked DNA replication forks via replication fork reversal (RFR). RuvA specifically binds to HJ cruciform DNA, conferring on it an open structure. The RuvB hexamer acts as an ATP-dependent pump, pulling dsDNA into and through the RuvAB complex. HJ branch migration allows RuvC to scan DNA until it finds its consensus sequence, where it cleaves and resolves the cruciform DNA. This chain is Holliday junction branch migration complex subunit RuvA, found in Bacteroides fragilis (strain ATCC 25285 / DSM 2151 / CCUG 4856 / JCM 11019 / LMG 10263 / NCTC 9343 / Onslow / VPI 2553 / EN-2).